The primary structure comprises 781 residues: Dynamin-related protein dnm1 (781 aa).

Positions 23 to 328 constitute a Dynamin-type G domain; that stretch reads FLDLPSIVVV…LVSHIRERLP (306 aa). A G1 motif region spans residues 33–40; sequence GSQSCGKS. 33–40 serves as a coordination point for GTP; that stretch reads GSQSCGKS. Residues 59–61 form a G2 motif region; that stretch reads VTR. The tract at residues 76 to 103 is disordered; it reads KNNHDEESTSDNNSEETSAAGETGSLEG. The interval 170–173 is G3 motif; sequence DLPG. Residues 170 to 174 and 239 to 242 each bind GTP; these read DLPGL and TKLD. The G4 motif stretch occupies residues 239-242; that stretch reads TKLD. Residues 269–272 are G5 motif; sequence VNRS. Residues 694 to 781 form the GED domain; it reads VDLIKELITS…QANKIISTVF (88 aa).

Belongs to the TRAFAC class dynamin-like GTPase superfamily. Dynamin/Fzo/YdjA family.

Its subcellular location is the cytoplasm. It localises to the mitochondrion outer membrane. The enzyme catalyses GTP + H2O = GDP + phosphate + H(+). Functionally, microtubule-associated force-producing protein that mediates mitochondrial fission during interphasic growth and at cell division. Fission of mitochondria occurs in many cell types and constitutes an important step in mitochondria morphology, which is balanced between fusion and fission. With vps1, acts redundantly in peroxisome biogenesis, which is under cell cycle control. The protein is Dynamin-related protein dnm1 (dnm1) of Schizosaccharomyces pombe (strain 972 / ATCC 24843) (Fission yeast).